Consider the following 351-residue polypeptide: Probable NADP-dependent isopropanol dehydrogenase (351 aa).

Residues C37, H59, E60, and D150 each coordinate Zn(2+). NADP(+)-binding positions include 175–178, 198–200, 265–267, and K340; these read AGPV, DSR, and VNY.

This sequence belongs to the zinc-containing alcohol dehydrogenase family. Zn(2+) is required as a cofactor.

The enzyme catalyses propan-2-ol + NADP(+) = acetone + NADPH + H(+). In terms of biological role, alcohol dehydrogenase with a preference for medium chain secondary alcohols, such as 2-butanol and isopropanol. Has very low activity with primary alcohols, such as ethanol. Under physiological conditions, the enzyme reduces aldehydes and 2-ketones to produce secondary alcohols. Is also active with acetaldehyde and propionaldehyde. The protein is Probable NADP-dependent isopropanol dehydrogenase (adh) of Mycoplasma pneumoniae (strain ATCC 29342 / M129 / Subtype 1) (Mycoplasmoides pneumoniae).